Reading from the N-terminus, the 85-residue chain is Putative RING finger protein 095L (85 aa).

Residues 39-73 (CPIWYNYQVNTVFLPCAHVACYLCSKIIKNCHLCR) form an RING-type; degenerate zinc finger.

This chain is Putative RING finger protein 095L, found in Invertebrate iridescent virus 6 (IIV-6).